A 141-amino-acid chain; its full sequence is Hemoglobin subunit alpha-D (141 aa).

One can recognise a Globin domain in the interval 1-141; it reads VLTAEDRRLL…VADVLCEKYR (141 aa). Residues Gln58 and His87 each coordinate heme b.

Belongs to the globin family. Heterotetramer of two alpha chains and two beta chains. As to expression, red blood cells.

In terms of biological role, involved in oxygen transport from the lung to the various peripheral tissues. This Drymarchon melanurus erebennus (Texas indigo snake) protein is Hemoglobin subunit alpha-D.